A 365-amino-acid polypeptide reads, in one-letter code: tRNA/tmRNA (uracil-C(5))-methyltransferase (365 aa).

Positions 189, 217, 222, 238, and 298 each coordinate S-adenosyl-L-methionine. C323 functions as the Nucleophile in the catalytic mechanism. E357 acts as the Proton acceptor in catalysis.

The protein belongs to the class I-like SAM-binding methyltransferase superfamily. RNA M5U methyltransferase family. TrmA subfamily.

It carries out the reaction uridine(54) in tRNA + S-adenosyl-L-methionine = 5-methyluridine(54) in tRNA + S-adenosyl-L-homocysteine + H(+). The enzyme catalyses uridine(341) in tmRNA + S-adenosyl-L-methionine = 5-methyluridine(341) in tmRNA + S-adenosyl-L-homocysteine + H(+). Functionally, dual-specificity methyltransferase that catalyzes the formation of 5-methyluridine at position 54 (m5U54) in all tRNAs, and that of position 341 (m5U341) in tmRNA (transfer-mRNA). The protein is tRNA/tmRNA (uracil-C(5))-methyltransferase of Shewanella woodyi (strain ATCC 51908 / MS32).